The sequence spans 156 residues: Peptide deformylase 1 (156 aa).

Fe cation contacts are provided by C90 and H132. E133 is a catalytic residue. Residue H136 coordinates Fe cation.

It belongs to the polypeptide deformylase family. Fe(2+) is required as a cofactor.

The catalysed reaction is N-terminal N-formyl-L-methionyl-[peptide] + H2O = N-terminal L-methionyl-[peptide] + formate. Removes the formyl group from the N-terminal Met of newly synthesized proteins. Requires at least a dipeptide for an efficient rate of reaction. N-terminal L-methionine is a prerequisite for activity but the enzyme has broad specificity at other positions. The protein is Peptide deformylase 1 of Bacillus anthracis.